A 494-amino-acid polypeptide reads, in one-letter code: Solute carrier family 2, facilitated glucose transporter member 3 (494 aa).

Over 1-10 (MGTTKVTAPL) the chain is Cytoplasmic. The helical transmembrane segment at 11–32 (IFAISVATIGSFQFGYNTGVIN) threads the bilayer. At 33-64 (APEAIIKDFLNYTLEERSEPPPSSVLLTSLWS) the chain is on the extracellular side. A glycan (N-linked (GlcNAc...) asparagine) is linked at asparagine 43. Residues 65 to 85 (LSVAIFSVGGMIGSFSVGLFV) form a helical membrane-spanning segment. The Cytoplasmic segment spans residues 86 to 90 (NRFGR). The helical transmembrane segment at 91–111 (GNSMLIVNLLAIAGGCLMGFC) threads the bilayer. The Extracellular segment spans residues 112-118 (KIAESVE). The chain crosses the membrane as a helical span at residues 119 to 142 (MLILGRLIIGLFCGLCTGFVPMYI). The Cytoplasmic segment spans residues 143–153 (GEISPTALRGA). A helical membrane pass occupies residues 154–174 (FGTLNQLGIVIGILVAQIFGL). Glutamine 159 is a binding site for D-glucose. The Extracellular portion of the chain corresponds to 175 to 183 (KVILGTEDL). Residues 184–204 (WPLLLGFTILPAIIQCAALPF) form a helical membrane-spanning segment. Residues 205–269 (CPESPRFLLI…LFRAPNYRQP (65 aa)) are Cytoplasmic-facing. A Phosphothreonine modification is found at threonine 232. Residues 270 to 290 (IIISIMLQLSQQLSGINAVFY) traverse the membrane as a helical segment. Residues 277–279 (QLS) form an important for selectivity against fructose region. D-glucose is bound by residues 280 to 281 (QQ) and asparagine 286. At 291 to 304 (YSTGIFKDAGVQEP) the chain is on the extracellular side. A helical membrane pass occupies residues 305–325 (VYATIGAGVVNTIFTVVSVFL). A D-glucose-binding site is contributed by asparagine 315. The Cytoplasmic segment spans residues 326–331 (VERAGR). A helical membrane pass occupies residues 332–352 (RTLHLIGLGGMAFCSILMTIS). The Extracellular portion of the chain corresponds to 353-363 (LLLKDNYSWMS). The N-linked (GlcNAc...) asparagine glycan is linked to asparagine 358. A helical membrane pass occupies residues 364 to 389 (FICIGAILVFVAFFEIGPGPIPWFIV). Positions 378 and 386 each coordinate D-glucose. Residues 390 to 399 (AELFGQGPRP) lie on the Cytoplasmic side of the membrane. The helical transmembrane segment at 400–420 (AAMAVAGCSNWTSNFLVGLLF) threads the bilayer. The Extracellular portion of the chain corresponds to 421 to 429 (PSAAFYLGA). Residues 430–450 (YVFIVFTVFLVIFWVFTFFKV) traverse the membrane as a helical segment. Over 451–494 (PETRGRTFEEITRAFEGQTQTGTRGEKGPIMEMNSIQPTKDTNA) the chain is Cytoplasmic. The segment at 469-494 (TQTGTRGEKGPIMEMNSIQPTKDTNA) is disordered. Residues 484-494 (NSIQPTKDTNA) are compositionally biased toward polar residues. Serine 485 carries the post-translational modification Phosphoserine. Threonine 492 is modified (phosphothreonine).

The protein belongs to the major facilitator superfamily. Sugar transporter (TC 2.A.1.1) family. Glucose transporter subfamily. As to quaternary structure, interacts with SMIM43; the interaction may promote SLC2A1-mediated glucose transport to meet the energy needs of mesendoderm differentiation.

The protein resides in the cell membrane. It is found in the perikaryon. The protein localises to the cell projection. The catalysed reaction is D-glucose(out) = D-glucose(in). It carries out the reaction D-galactose(in) = D-galactose(out). With respect to regulation, deoxyglucose transport is inhibited by D-glucose, D-galactose and maltose. Galactose transport is inhibited by D-glucose and maltose. Facilitative glucose transporter. Can also mediate the uptake of various other monosaccharides across the cell membrane. Mediates the uptake of glucose, 2-deoxyglucose, galactose, mannose, xylose and fucose, and probably also dehydroascorbate. Does not mediate fructose transport. Required for mesendoderm differentiation. The chain is Solute carrier family 2, facilitated glucose transporter member 3 from Bos taurus (Bovine).